Consider the following 549-residue polypeptide: Urocanate hydratase (549 aa).

NAD(+) contacts are provided by residues 46 to 47 (GG), Gln124, Glu190, Arg195, 236 to 237 (NA), 257 to 261 (QTSAH), 267 to 268 (YV), and Tyr316. Cys404 is an active-site residue. Residue Gly486 coordinates NAD(+).

Belongs to the urocanase family. It depends on NAD(+) as a cofactor.

The protein localises to the cytoplasm. The enzyme catalyses 4-imidazolone-5-propanoate = trans-urocanate + H2O. It participates in amino-acid degradation; L-histidine degradation into L-glutamate; N-formimidoyl-L-glutamate from L-histidine: step 2/3. Functionally, catalyzes the conversion of urocanate to 4-imidazolone-5-propionate. This chain is Urocanate hydratase, found in Thermoanaerobacter pseudethanolicus (strain ATCC 33223 / 39E) (Clostridium thermohydrosulfuricum).